Consider the following 377-residue polypeptide: DNA-directed RNA polymerase subunit alpha (377 aa).

An alpha N-terminal domain (alpha-NTD) region spans residues 1 to 259 (MSDSSHNLLY…KHFSVFEKMD (259 aa)). An alpha C-terminal domain (alpha-CTD) region spans residues 276–377 (KDDILHKLVL…KIRLSKNTKG (102 aa)).

This sequence belongs to the RNA polymerase alpha chain family. Homodimer. The RNAP catalytic core consists of 2 alpha, 1 beta, 1 beta' and 1 omega subunit. When a sigma factor is associated with the core the holoenzyme is formed, which can initiate transcription.

It catalyses the reaction RNA(n) + a ribonucleoside 5'-triphosphate = RNA(n+1) + diphosphate. DNA-dependent RNA polymerase catalyzes the transcription of DNA into RNA using the four ribonucleoside triphosphates as substrates. The chain is DNA-directed RNA polymerase subunit alpha from Chlamydia trachomatis serovar A (strain ATCC VR-571B / DSM 19440 / HAR-13).